Consider the following 90-residue polypeptide: Small ribosomal subunit protein uS17 (90 aa).

This sequence belongs to the universal ribosomal protein uS17 family. Part of the 30S ribosomal subunit.

One of the primary rRNA binding proteins, it binds specifically to the 5'-end of 16S ribosomal RNA. The polypeptide is Small ribosomal subunit protein uS17 (Burkholderia multivorans (strain ATCC 17616 / 249)).